We begin with the raw amino-acid sequence, 200 residues long: Superoxide dismutase [Fe] (200 aa).

4 residues coordinate Fe cation: His28, His82, Asp165, and His169.

Belongs to the iron/manganese superoxide dismutase family. As to quaternary structure, homodimer. Fe cation is required as a cofactor.

The catalysed reaction is 2 superoxide + 2 H(+) = H2O2 + O2. Functionally, destroys superoxide anion radicals which are normally produced within the cells and which are toxic to biological systems. The polypeptide is Superoxide dismutase [Fe] (sodB) (Rhodobacter capsulatus (Rhodopseudomonas capsulata)).